Consider the following 146-residue polypeptide: Hemoglobin subunit beta (146 aa).

Position 1 is an N-acetylvaline (valine 1). The Globin domain occupies 2-146 (HLTGEEKSAV…VANALAHKYH (145 aa)). Position 12 is a phosphothreonine (threonine 12). Serine 44 carries the post-translational modification Phosphoserine. Lysine 59 is subject to N6-acetyllysine. Residue histidine 63 participates in heme b binding. Lysine 82 bears the N6-acetyllysine mark. Histidine 92 contributes to the heme b binding site. Cysteine 93 carries the post-translational modification S-nitrosocysteine. Lysine 144 is modified (N6-acetyllysine).

This sequence belongs to the globin family. In terms of assembly, heterotetramer of two alpha chains and two beta chains. As to expression, red blood cells.

Its function is as follows. Involved in oxygen transport from the lung to the various peripheral tissues. This Phoca vitulina (Harbor seal) protein is Hemoglobin subunit beta (HBB).